Consider the following 465-residue polypeptide: 23S rRNA (uracil(1939)-C(5))-methyltransferase RlmD (465 aa).

Residues 1–24 form a disordered region; the sequence is MSEAVPLSTRRASSAGDAPGRAPV. One can recognise a TRAM domain in the interval 16-80; it reads GDAPGRAPVL…PTYEQAQVVD (65 aa). Positions 93, 99, 102, and 181 each coordinate [4Fe-4S] cluster. Residues Gln289, Phe318, Asn323, Glu339, Asn367, and Asp388 each contribute to the S-adenosyl-L-methionine site. Cys421 (nucleophile) is an active-site residue.

The protein belongs to the class I-like SAM-binding methyltransferase superfamily. RNA M5U methyltransferase family. RlmD subfamily.

It carries out the reaction uridine(1939) in 23S rRNA + S-adenosyl-L-methionine = 5-methyluridine(1939) in 23S rRNA + S-adenosyl-L-homocysteine + H(+). Functionally, catalyzes the formation of 5-methyl-uridine at position 1939 (m5U1939) in 23S rRNA. This Burkholderia mallei (strain ATCC 23344) protein is 23S rRNA (uracil(1939)-C(5))-methyltransferase RlmD.